The chain runs to 509 residues: UDP-N-acetylmuramyl-tripeptide synthetase (509 aa).

Residue Ser30 coordinates UDP-N-acetyl-alpha-D-muramoyl-L-alanyl-D-glutamate. An ATP-binding site is contributed by 111–117; the sequence is GTDGKTT. Residues 155–156, Thr182, and Arg192 each bind UDP-N-acetyl-alpha-D-muramoyl-L-alanyl-D-glutamate; that span reads ST. Lys224 carries the post-translational modification N6-carboxylysine.

This sequence belongs to the MurCDEF family. MurE subfamily. Carboxylation is probably crucial for Mg(2+) binding and, consequently, for the gamma-phosphate positioning of ATP.

It is found in the cytoplasm. The protein operates within cell wall biogenesis; peptidoglycan biosynthesis. Its function is as follows. Catalyzes the addition of an amino acid to the nucleotide precursor UDP-N-acetylmuramoyl-L-alanyl-D-glutamate (UMAG) in the biosynthesis of bacterial cell-wall peptidoglycan. The polypeptide is UDP-N-acetylmuramyl-tripeptide synthetase (Roseiflexus sp. (strain RS-1)).